Here is a 1023-residue protein sequence, read N- to C-terminus: Sodium/potassium-transporting ATPase subunit alpha-1 (1023 aa).

Positions 1-5 (MGLGK) are excised as a propeptide. The span at 1–11 (MGLGKGKDEYK) shows a compositional bias: basic and acidic residues. The segment at 1–33 (MGLGKGKDEYKLAATSEDGGKKDKKAKAKKDMD) is disordered. Residues 6-87 (GKDEYKLAAT…NALTPPPTTP (82 aa)) lie on the Cytoplasmic side of the membrane. The residue at position 16 (Ser16) is a Phosphoserine; by PKC. The segment at 82–84 (PPP) is interaction with phosphoinositide-3 kinase. Residues 88-108 (EWVKFCKQLFGGFSMLLWIGA) traverse the membrane as a helical segment. Over 109–131 (ILCFLAYGIQAASEDEPANDNLY) the chain is Extracellular. Residues 132–152 (LGIVLSAVVIITGCFSYYQEA) form a helical membrane-spanning segment. Over 153-288 (KSSKIMESFK…GGKTPIAIEI (136 aa)) the chain is Cytoplasmic. The interval 216–237 (SSLTGESEPQTRSPDFSNENPL) is disordered. A helical transmembrane segment spans residues 289–308 (EHFIHIITGVAVFLGVSFFI). At 309–320 (LSLILGYNWLEA) the chain is on the extracellular side. A helical transmembrane segment spans residues 321–338 (VIFLIGIIVANVPEGLLA). Topologically, residues 339–772 (TVTVCLTLTA…EEGRLIFDNL (434 aa)) are cytoplasmic. Residue Asp376 is the 4-aspartylphosphate intermediate of the active site. Lys487 provides a ligand contact to ATP. Mg(2+) contacts are provided by Asp717 and Asp721. The chain crosses the membrane as a helical span at residues 773–792 (KKSIAYTLTSNIPEISPFLL). At 793 to 802 (FIIANIPLPL) the chain is on the extracellular side. A helical transmembrane segment spans residues 803–823 (GTVTILCIDLGTDMVPAISLA). At 824–843 (YEKAESDIMKRQPRNPKTDK) the chain is on the cytoplasmic side. Residues 844-866 (LVNERLISIAYGQIGMMQATAGF) form a helical membrane-spanning segment. Residues 867–918 (FTYFVILAENGFLPMDLIGVRVLWDDKYVNDLEDSYGQQWTYERRKIVEYSC) are Extracellular-facing. Residues 919 to 938 (HTAFFASIVIVQWADLIICK) form a helical membrane-spanning segment. Topologically, residues 939 to 951 (TRRNSIVQQGMTN) are cytoplasmic. Ser943 is subject to Phosphoserine; by PKA. Residues 952 to 970 (RILIFGLFEETALAAFLSY) form a helical membrane-spanning segment. Residues 971–985 (CPGMDVALRMYPMKP) are Extracellular-facing. A helical transmembrane segment spans residues 986–1006 (LWWFCAFPYSLLIFLYDEARR). The Cytoplasmic segment spans residues 1007 to 1023 (YILRRNPGGWVEKETYY).

Belongs to the cation transport ATPase (P-type) (TC 3.A.3) family. Type IIC subfamily. In terms of assembly, the sodium/potassium-transporting ATPase is composed of a catalytic alpha subunit, an auxiliary non-catalytic beta subunit and an additional regulatory subunit.

It is found in the cell membrane. It localises to the sarcolemma. The enzyme catalyses K(+)(out) + Na(+)(in) + ATP + H2O = K(+)(in) + Na(+)(out) + ADP + phosphate + H(+). In terms of biological role, this is the catalytic component of the active enzyme, which catalyzes the hydrolysis of ATP coupled with the exchange of sodium and potassium ions across the plasma membrane. This action creates the electrochemical gradient of sodium and potassium ions, providing the energy for active transport of various nutrients. This chain is Sodium/potassium-transporting ATPase subunit alpha-1 (atp1a1), found in Oreochromis mossambicus (Mozambique tilapia).